We begin with the raw amino-acid sequence, 205 residues long: Protein-L-isoaspartate O-methyltransferase (205 aa).

The active site involves Ser56.

Belongs to the methyltransferase superfamily. L-isoaspartyl/D-aspartyl protein methyltransferase family.

Its subcellular location is the cytoplasm. The catalysed reaction is [protein]-L-isoaspartate + S-adenosyl-L-methionine = [protein]-L-isoaspartate alpha-methyl ester + S-adenosyl-L-homocysteine. In terms of biological role, catalyzes the methyl esterification of L-isoaspartyl residues in peptides and proteins that result from spontaneous decomposition of normal L-aspartyl and L-asparaginyl residues. It plays a role in the repair and/or degradation of damaged proteins. This is Protein-L-isoaspartate O-methyltransferase from Aeromonas hydrophila subsp. hydrophila (strain ATCC 7966 / DSM 30187 / BCRC 13018 / CCUG 14551 / JCM 1027 / KCTC 2358 / NCIMB 9240 / NCTC 8049).